The following is a 224-amino-acid chain: NADH-quinone oxidoreductase subunit B (224 aa).

Cys-67, Cys-68, Cys-133, and Cys-162 together coordinate [4Fe-4S] cluster. The tract at residues 200–224 (DMPAEKDRKRGERIKVTNLRTPDEI) is disordered. Residues 201–224 (MPAEKDRKRGERIKVTNLRTPDEI) are compositionally biased toward basic and acidic residues.

The protein belongs to the complex I 20 kDa subunit family. NDH-1 is composed of 14 different subunits. Subunits NuoB, C, D, E, F, and G constitute the peripheral sector of the complex. [4Fe-4S] cluster serves as cofactor.

The protein localises to the cell inner membrane. The catalysed reaction is a quinone + NADH + 5 H(+)(in) = a quinol + NAD(+) + 4 H(+)(out). NDH-1 shuttles electrons from NADH, via FMN and iron-sulfur (Fe-S) centers, to quinones in the respiratory chain. The immediate electron acceptor for the enzyme in this species is believed to be ubiquinone. Couples the redox reaction to proton translocation (for every two electrons transferred, four hydrogen ions are translocated across the cytoplasmic membrane), and thus conserves the redox energy in a proton gradient. The chain is NADH-quinone oxidoreductase subunit B from Aeromonas salmonicida (strain A449).